The sequence spans 296 residues: NmrA-like family domain-containing protein 1 (296 aa).

NADP(+)-binding positions include 11 to 16 (GATGAQ), 37 to 41 (RSPGR), 58 to 59 (DQ), 79 to 81 (TNF), lysine 133, and 155 to 158 (YYEN).

It belongs to the NmrA-type oxidoreductase family. As to quaternary structure, homodimer.

The protein localises to the cytoplasm. It localises to the perinuclear region. The protein resides in the nucleus. Its function is as follows. Redox sensor protein. Undergoes restructuring and subcellular redistribution in response to changes in intracellular NADPH/NADP(+) levels. The sequence is that of NmrA-like family domain-containing protein 1 (NMRAL1) from Gallus gallus (Chicken).